We begin with the raw amino-acid sequence, 137 residues long: Nucleoside diphosphate kinase (137 aa).

6 residues coordinate ATP: Lys-9, Phe-57, Arg-85, Thr-91, Arg-102, and Asn-112. Residue His-115 is the Pros-phosphohistidine intermediate of the active site.

Belongs to the NDK family. Homotetramer. The cofactor is Mg(2+).

The protein resides in the cytoplasm. The enzyme catalyses a 2'-deoxyribonucleoside 5'-diphosphate + ATP = a 2'-deoxyribonucleoside 5'-triphosphate + ADP. The catalysed reaction is a ribonucleoside 5'-diphosphate + ATP = a ribonucleoside 5'-triphosphate + ADP. Functionally, major role in the synthesis of nucleoside triphosphates other than ATP. The ATP gamma phosphate is transferred to the NDP beta phosphate via a ping-pong mechanism, using a phosphorylated active-site intermediate. The chain is Nucleoside diphosphate kinase from Campylobacter fetus subsp. fetus (strain 82-40).